Consider the following 598-residue polypeptide: Probable translation initiation factor IF-2 (598 aa).

The tr-type G domain occupies 3 to 225 (LRCPIVSVLG…GLAQKFLEQK (223 aa)). Positions 12–19 (GHVDHGKT) are G1. 12–19 (GHVDHGKT) lines the GTP pocket. The interval 37 to 41 (GITQH) is G2. Residues 76–79 (DTPG) are G3. GTP contacts are provided by residues 76–80 (DTPGH) and 130–133 (NKVD). A G4 region spans residues 130 to 133 (NKVD). The interval 200-202 (SAM) is G5.

The protein belongs to the TRAFAC class translation factor GTPase superfamily. Classic translation factor GTPase family. IF-2 subfamily.

Functionally, function in general translation initiation by promoting the binding of the formylmethionine-tRNA to ribosomes. Seems to function along with eIF-2. This is Probable translation initiation factor IF-2 from Methanococcus maripaludis (strain C5 / ATCC BAA-1333).